The primary structure comprises 89 residues: Small ribosomal subunit protein uS15 (89 aa).

It belongs to the universal ribosomal protein uS15 family. Part of the 30S ribosomal subunit. Forms a bridge to the 50S subunit in the 70S ribosome, contacting the 23S rRNA.

Functionally, one of the primary rRNA binding proteins, it binds directly to 16S rRNA where it helps nucleate assembly of the platform of the 30S subunit by binding and bridging several RNA helices of the 16S rRNA. Forms an intersubunit bridge (bridge B4) with the 23S rRNA of the 50S subunit in the ribosome. In Methylobacterium nodulans (strain LMG 21967 / CNCM I-2342 / ORS 2060), this protein is Small ribosomal subunit protein uS15.